The chain runs to 305 residues: NAD-dependent protein deacylase sirtuin-5, mitochondrial (305 aa).

The transit peptide at 1 to 32 directs the protein to the mitochondrion; it reads MIVRQLWCSRGSTSHLCAAVRLNWRSPKMTRP. In terms of domain architecture, Deacetylase sirtuin-type spans 33-303; sequence SSDLTAFREH…PPALERHESE (271 aa). 54–73 is an NAD(+) binding site; the sequence is GAGVSAESGVPTFRGPGGFW. Substrate contacts are provided by Tyr98 and Arg101. An NAD(+)-binding site is contributed by 136 to 139; sequence QNID. His154 serves as the catalytic Proton acceptor. Cys162, Cys165, Cys203, and Cys208 together coordinate Zn(2+). NAD(+)-binding positions include 245–247, 271–273, and Cys289; these read GTS and NME.

It belongs to the sirtuin family. Class III subfamily. The cofactor is Zn(2+).

The protein localises to the mitochondrion. The protein resides in the cytoplasm. It is found in the cytosol. It localises to the nucleus. It carries out the reaction N(6)-malonyl-L-lysyl-[protein] + NAD(+) + H2O = 2''-O-malonyl-ADP-D-ribose + nicotinamide + L-lysyl-[protein]. The enzyme catalyses N(6)-succinyl-L-lysyl-[protein] + NAD(+) + H2O = 2''-O-succinyl-ADP-D-ribose + nicotinamide + L-lysyl-[protein]. It catalyses the reaction N(6)-glutaryl-L-lysyl-[protein] + NAD(+) + H2O = 2''-O-glutaryl-ADP-D-ribose + nicotinamide + L-lysyl-[protein]. In terms of biological role, NAD-dependent lysine demalonylase, desuccinylase and deglutarylase that specifically removes malonyl, succinyl and glutaryl groups on target proteins. Has weak NAD-dependent protein deacetylase activity; however this activity may not be physiologically relevant in vivo. The polypeptide is NAD-dependent protein deacylase sirtuin-5, mitochondrial (sirt5) (Danio rerio (Zebrafish)).